A 95-amino-acid polypeptide reads, in one-letter code: Osteocalcin-2 (95 aa).

The first 23 residues, 1–23 (MRTLSLLTLLALAALCLSDLTDA), serve as a signal peptide directing secretion. Residues 24–49 (KPSGPESDKAFMSKQEGNKVVNRLRR) constitute a propeptide that is removed on maturation. Positions 46 to 92 (RLRRYLGASVPSPDPLEPTREQCELNPACDELSDQYGLKTAYKRIYG) constitute a Gla domain. The Ca(2+) site is built by glutamate 62, glutamate 66, glutamate 69, and aspartate 75. Cysteine 68 and cysteine 74 are joined by a disulfide.

This sequence belongs to the osteocalcin/matrix Gla protein family. Post-translationally, gamma-carboxyglutamate residues are formed by vitamin K dependent carboxylation by GGCX. These residues are essential for the binding of calcium. Carboxylated in a Ptprv/Esp-dependent process. Decarboxylation promotes the hormone activity. In terms of tissue distribution, bone.

It localises to the secreted. Functionally, the carboxylated form is one of the main organic components of the bone matrix, which constitutes 1-2% of the total bone protein: it acts as a negative regulator of bone formation and is required to limit bone formation without impairing bone resorption or mineralization. The carboxylated form binds strongly to apatite and calcium. The uncarboxylated form acts as a hormone secreted by osteoblasts, which regulates different cellular processes, such as energy metabolism, male fertility and brain development. Regulates of energy metabolism by acting as a hormone favoring pancreatic beta-cell proliferation, insulin secretion and sensitivity and energy expenditure. Uncarboxylated osteocalcin hormone also promotes testosterone production in the testes: acts as a ligand for G protein-coupled receptor GPRC6A at the surface of Leydig cells, initiating a signaling response that promotes the expression of enzymes required for testosterone synthesis in a CREB-dependent manner. Also acts as a regulator of brain development: osteocalcin hormone crosses the blood-brain barrier and acts as a ligand for GPR158 on neurons, initiating a signaling response that prevents neuronal apoptosis in the hippocampus, favors the synthesis of all monoamine neurotransmitters and inhibits that of gamma-aminobutyric acid (GABA). Osteocalcin also crosses the placenta during pregnancy and maternal osteocalcin is required for fetal brain development. This chain is Osteocalcin-2 (Bglap2), found in Mus musculus (Mouse).